The following is a 388-amino-acid chain: Succinate--CoA ligase [ADP-forming] subunit beta (388 aa).

The ATP-grasp domain maps to 9–246 (KDILRQFGVP…FEEEDPAEVL (238 aa)). Residues lysine 46, 53–55 (GRG), glutamate 99, alanine 102, and glutamate 107 each bind ATP. Mg(2+) contacts are provided by asparagine 201 and aspartate 215. Substrate-binding positions include asparagine 266 and 323–325 (GIM).

The protein belongs to the succinate/malate CoA ligase beta subunit family. As to quaternary structure, heterotetramer of two alpha and two beta subunits. Mg(2+) serves as cofactor.

The enzyme catalyses succinate + ATP + CoA = succinyl-CoA + ADP + phosphate. It catalyses the reaction GTP + succinate + CoA = succinyl-CoA + GDP + phosphate. It participates in carbohydrate metabolism; tricarboxylic acid cycle; succinate from succinyl-CoA (ligase route): step 1/1. Its function is as follows. Succinyl-CoA synthetase functions in the citric acid cycle (TCA), coupling the hydrolysis of succinyl-CoA to the synthesis of either ATP or GTP and thus represents the only step of substrate-level phosphorylation in the TCA. The beta subunit provides nucleotide specificity of the enzyme and binds the substrate succinate, while the binding sites for coenzyme A and phosphate are found in the alpha subunit. The sequence is that of Succinate--CoA ligase [ADP-forming] subunit beta from Verminephrobacter eiseniae (strain EF01-2).